Consider the following 144-residue polypeptide: Glycophorin-A (144 aa).

Polar residues predominate over residues 1 to 25 (SSTTVPATHTSSSSLGPEQYVSSQS). The interval 1–55 (SSTTVPATHTSSSSLGPEQYVSSQSNDKHTSDSHPTPTSAHEVTTEFSGRTHYPP) is disordered. O-linked (GalNAc...) serine glycosylation is present at Ser2. O-linked (GalNAc...) threonine glycans are attached at residues Thr3, Thr4, Thr8, and Thr10. Ser11, Ser12, Ser13, Ser14, Ser22, and Ser23 each carry an O-linked (GalNAc...) serine glycan. Residues Thr30, Thr36, Thr38, Thr44, and Thr45 are each glycosylated (O-linked (GalNAc...) threonine). The span at 33 to 48 (SHPTPTSAHEVTTEFS) shows a compositional bias: polar residues. Ser48 carries an O-linked (GalNAc...) serine glycan. A glycan (O-linked (GalNAc...) threonine) is linked at Thr51. Residues 70-92 (LVIALIIFGVMAGVIGTILFISY) traverse the membrane as a helical segment. The segment at 101–144 (SESDVQPLPPPDAEVPLSSVEIEDPEETDELNSFTKPNQERNES) is disordered. Ser118 is modified (phosphoserine). The span at 121–130 (EIEDPEETDE) shows a compositional bias: acidic residues.

It belongs to the glycophorin-A family. As to quaternary structure, homodimer. Component of the ankyrin-1 complex in the erythrocyte, composed of ANK1, RHCE, RHAG, SLC4A1, EPB42, GYPA, GYPB and AQP1. Interacts with SLC4A1; a GYPA monomer is bound at each end of the SLC4A1 dimer forming a heterotetramer.

Its subcellular location is the membrane. Functionally, component of the ankyrin-1 complex, a multiprotein complex involved in the stability and shape of the erythrocyte membrane. Glycophorin A is the major intrinsic membrane protein of the erythrocyte. The N-terminal glycosylated segment, which lies outside the erythrocyte membrane, has MN blood group receptors. Appears to be important for the function of SLC4A1 and is required for high activity of SLC4A1. May be involved in translocation of SLC4A1 to the plasma membrane. This is Glycophorin-A from Macaca fuscata fuscata (Japanese macaque).